The chain runs to 330 residues: Ketol-acid reductoisomerase (NADP(+)) (330 aa).

The KARI N-terminal Rossmann domain maps to 3-184; it reads LPVYYDKDID…GGGRMGVLET (182 aa). NADP(+)-binding positions include 26–29, Ser-52, and Ser-54; that span reads YGAQ. The active site involves His-109. NADP(+) is bound at residue Gly-135. One can recognise a KARI C-terminal knotted domain in the interval 185–329; sequence SFKEECESDL…EILRAPFNHK (145 aa). Residues Asp-193, Glu-197, Glu-229, and Glu-233 each coordinate Mg(2+). Ser-254 contributes to the substrate binding site.

The protein belongs to the ketol-acid reductoisomerase family. Mg(2+) is required as a cofactor.

It carries out the reaction (2R)-2,3-dihydroxy-3-methylbutanoate + NADP(+) = (2S)-2-acetolactate + NADPH + H(+). The catalysed reaction is (2R,3R)-2,3-dihydroxy-3-methylpentanoate + NADP(+) = (S)-2-ethyl-2-hydroxy-3-oxobutanoate + NADPH + H(+). It participates in amino-acid biosynthesis; L-isoleucine biosynthesis; L-isoleucine from 2-oxobutanoate: step 2/4. It functions in the pathway amino-acid biosynthesis; L-valine biosynthesis; L-valine from pyruvate: step 2/4. Its function is as follows. Involved in the biosynthesis of branched-chain amino acids (BCAA). Catalyzes an alkyl-migration followed by a ketol-acid reduction of (S)-2-acetolactate (S2AL) to yield (R)-2,3-dihydroxy-isovalerate. In the isomerase reaction, S2AL is rearranged via a Mg-dependent methyl migration to produce 3-hydroxy-3-methyl-2-ketobutyrate (HMKB). In the reductase reaction, this 2-ketoacid undergoes a metal-dependent reduction by NADPH to yield (R)-2,3-dihydroxy-isovalerate. The polypeptide is Ketol-acid reductoisomerase (NADP(+)) (Helicobacter pylori (strain ATCC 700392 / 26695) (Campylobacter pylori)).